Reading from the N-terminus, the 278-residue chain is Large ribosomal subunit protein uL2 (278 aa).

Disordered regions lie at residues 1-20 and 225-278; these read MGIRKYKPTTPGRRGSSVSD and VMNP…GKKR. Positions 258–278 are enriched in basic residues; it reads RNKKKASSRLIVRRRKSGKKR.

It belongs to the universal ribosomal protein uL2 family. In terms of assembly, part of the 50S ribosomal subunit. Forms a bridge to the 30S subunit in the 70S ribosome.

One of the primary rRNA binding proteins. Required for association of the 30S and 50S subunits to form the 70S ribosome, for tRNA binding and peptide bond formation. It has been suggested to have peptidyltransferase activity; this is somewhat controversial. Makes several contacts with the 16S rRNA in the 70S ribosome. The chain is Large ribosomal subunit protein uL2 from Cutibacterium acnes (strain DSM 16379 / KPA171202) (Propionibacterium acnes).